Reading from the N-terminus, the 85-residue chain is Turripeptide PaIAa (85 aa).

This sequence belongs to the turripeptide family. As to expression, expressed by the venom duct.

Its subcellular location is the secreted. Is lethal to drosophila larvae. This chain is Turripeptide PaIAa, found in Polystira albida (White giant-turris).